Reading from the N-terminus, the 657-residue chain is MLNQNNQELFKPSKEFSRNARIKNLCEYYDLCDEAKEDFEGFWKRQAFEKIEWFSPFSRVLNEDKAPFYKWFEGGTLNVSYQCLDRHMKTRRNKAALIFEGEMGDYEVYTYRRLLHETCKAANLLKKFGVKKGDRVVIYMPMIPETAIVMLACARIGAIHSVVFGGFSPEALRDRIIDAGAKLVVTADGAFRRGKPYMLKPAVDKALSEGCESVEKVLIVIRNNEPIEYIKGRDYVYNELVKNESYKCEPEIMDSEDLLFLLYTSGSTGKPKGVMHASAGYILWAQMTMEWVFDIKDYDNYWCSADVGWITGHTYVVYGPLACGATTIMHEGTPTYPNSGRWWRMIEEYQISKFYTSPTAIRMLHADAPNEPRKYDLSTLEVLGTVGEPINPSAWKWFYDEIGGTKSPIVDTWWQTETGGHMITPLPGATPLKPGCATLPLPGIFAEVIDEEGNKKDEGEDGLLCITKPWPSMIRGIWGNDERYIESYFSQAKKDGKAVYFSGDGAFYDKNGYITITGRTDDVVNVAGHRIGTAEIESAIAKHPSVAESAVVSILDTIKGESLFAFVVLSPASSCDLGGAIETLKELNDILRVEIGPIAKIEKILYTPGLPKTRSGKIMRRILRTIARGEEIKQDISTLEDSKVVETIVKLAKAEFE.

CoA contacts are provided by residues arginine 192–lysine 195 and threonine 311. ATP contacts are provided by residues glycine 387–proline 389, aspartate 411–threonine 416, aspartate 504, arginine 519, and arginine 530. Histidine 543 and valine 546 together coordinate Mg(2+). Residue arginine 592 coordinates CoA. Lysine 617 carries the N6-acetyllysine modification.

Belongs to the ATP-dependent AMP-binding enzyme family. The cofactor is Mg(2+). Acetylated. Deacetylation by the SIR2-homolog deacetylase activates the enzyme.

The catalysed reaction is acetate + ATP + CoA = acetyl-CoA + AMP + diphosphate. Its function is as follows. Catalyzes the conversion of acetate into acetyl-CoA (AcCoA), an essential intermediate at the junction of anabolic and catabolic pathways. AcsA undergoes a two-step reaction. In the first half reaction, AcsA combines acetate with ATP to form acetyl-adenylate (AcAMP) intermediate. In the second half reaction, it can then transfer the acetyl group from AcAMP to the sulfhydryl group of CoA, forming the product AcCoA. The sequence is that of Acetyl-coenzyme A synthetase from Campylobacter jejuni subsp. jejuni serotype O:2 (strain ATCC 700819 / NCTC 11168).